A 678-amino-acid chain; its full sequence is Probable 3',5'-cyclic phosphodiesterase pde-3 (678 aa).

Disordered regions lie at residues 1-27 (MSPGPPAVGGVSPPVMVPGSAPPFQPT), 52-95 (AEMR…VLGG), and 223-250 (TVPAEPNKARSSSYWKTEASPSNNNEHE). Positions 7-19 (AVGGVSPPVMVPG) are enriched in low complexity. Composition is skewed to polar residues over residues 60-85 (TATSSPASSGVSIQQRRGSTTQNSGV) and 231-246 (ARSSSYWKTEASPSNN). Residues 281–632 (RYDTRELDTD…RKWKEQIELE (352 aa)) enclose the PDEase domain. The active-site Proton donor is His-356. A divalent metal cation-binding residues include His-360, His-421, Asp-422, and Asp-531. A disordered region spans residues 654–678 (EEESASTSDSPDPRRDSPLDSDLSQ).

Belongs to the cyclic nucleotide phosphodiesterase family. Requires a divalent metal cation as cofactor.

The catalysed reaction is a nucleoside 3',5'-cyclic phosphate + H2O = a nucleoside 5'-phosphate + H(+). In Caenorhabditis elegans, this protein is Probable 3',5'-cyclic phosphodiesterase pde-3 (pde-3).